Reading from the N-terminus, the 400-residue chain is Nicotinate phosphoribosyltransferase (400 aa).

Position 220 is a phosphohistidine; by autocatalysis (His220).

This sequence belongs to the NAPRTase family. Transiently phosphorylated on a His residue during the reaction cycle. Phosphorylation strongly increases the affinity for substrates and increases the rate of nicotinate D-ribonucleotide production. Dephosphorylation regenerates the low-affinity form of the enzyme, leading to product release.

The catalysed reaction is nicotinate + 5-phospho-alpha-D-ribose 1-diphosphate + ATP + H2O = nicotinate beta-D-ribonucleotide + ADP + phosphate + diphosphate. The protein operates within cofactor biosynthesis; NAD(+) biosynthesis; nicotinate D-ribonucleotide from nicotinate: step 1/1. Catalyzes the synthesis of beta-nicotinate D-ribonucleotide from nicotinate and 5-phospho-D-ribose 1-phosphate at the expense of ATP. The chain is Nicotinate phosphoribosyltransferase from Shigella dysenteriae serotype 1 (strain Sd197).